Reading from the N-terminus, the 343-residue chain is MYRTLFSLVLSRFDPERAHRLAFAAIRALPVIGLGSLLRRFTAPDPSLAVEALGLRFDSPFGIAAGFDKDGEGVIGLGALGFGHVEVGTITARPQPGNDKPRLFRLLPDRAVINRMGFNNHGAGAAANRLLRVRRARRRPVLGVNISKSRAVAVEDATADYLISARALAPVADYLVVNVSSPNTPGLRGLQEREALAPLLSAVKAASGKKPLLVKIAPDLTDEQIVAVARLAVELGLAGIIATNTTIARDGLSSDPAVVEAAGAGGLSGAPLAARSLEVLTLIRANVPPSLCVISVGGVETAQDVQRRLDAGATLVQGYTAFLYRGPLWARQITRGLSALRSR.

Residues 65–69 and T89 each bind FMN; that span reads AGFDK. A substrate-binding site is contributed by K69. Position 114–118 (114–118) interacts with substrate; the sequence is NRMGF. The FMN site is built by N145 and N178. N178 contributes to the substrate binding site. The Nucleophile role is filled by S181. N183 lines the substrate pocket. FMN-binding residues include K215 and T243. Substrate is bound at residue 244–245; the sequence is NT. Residues G269, G298, and 319–320 contribute to the FMN site; that span reads YT.

It belongs to the dihydroorotate dehydrogenase family. Type 2 subfamily. Monomer. FMN serves as cofactor.

The protein localises to the cell membrane. It catalyses the reaction (S)-dihydroorotate + a quinone = orotate + a quinol. The protein operates within pyrimidine metabolism; UMP biosynthesis via de novo pathway; orotate from (S)-dihydroorotate (quinone route): step 1/1. Functionally, catalyzes the conversion of dihydroorotate to orotate with quinone as electron acceptor. The protein is Dihydroorotate dehydrogenase (quinone) of Leifsonia xyli subsp. xyli (strain CTCB07).